Here is a 739-residue protein sequence, read N- to C-terminus: NAD(P)H-quinone oxidoreductase subunit 5, chloroplastic (739 aa).

16 consecutive transmembrane segments (helical) span residues L9 to F29, W40 to I60, I89 to I109, F125 to I145, I147 to T167, G185 to F205, L224 to F244, T258 to A278, L283 to L303, L327 to I347, A354 to S374, T396 to S416, W425 to Y445, L546 to F566, I605 to I625, and I718 to V738.

The protein belongs to the complex I subunit 5 family. In terms of assembly, NDH is composed of at least 16 different subunits, 5 of which are encoded in the nucleus.

The protein localises to the plastid. It is found in the chloroplast thylakoid membrane. It catalyses the reaction a plastoquinone + NADH + (n+1) H(+)(in) = a plastoquinol + NAD(+) + n H(+)(out). It carries out the reaction a plastoquinone + NADPH + (n+1) H(+)(in) = a plastoquinol + NADP(+) + n H(+)(out). Functionally, NDH shuttles electrons from NAD(P)H:plastoquinone, via FMN and iron-sulfur (Fe-S) centers, to quinones in the photosynthetic chain and possibly in a chloroplast respiratory chain. The immediate electron acceptor for the enzyme in this species is believed to be plastoquinone. Couples the redox reaction to proton translocation, and thus conserves the redox energy in a proton gradient. In Buxus microphylla (Littleleaf boxwood), this protein is NAD(P)H-quinone oxidoreductase subunit 5, chloroplastic (ndhF).